Consider the following 288-residue polypeptide: Leucine-rich repeat-containing protein 72 (288 aa).

LRR repeat units follow at residues Asp47 to Lys68, Lys69 to Tyr90, Cys91 to Pro112, and Ser113 to Leu134. The LRRCT domain maps to Asn148–Leu186.

The chain is Leucine-rich repeat-containing protein 72 (LRRC72) from Bos taurus (Bovine).